The primary structure comprises 373 residues: Citrate synthase (373 aa).

Active-site residues include H262 and D314.

The protein belongs to the citrate synthase family. Homohexamer.

It catalyses the reaction oxaloacetate + acetyl-CoA + H2O = citrate + CoA + H(+). It functions in the pathway carbohydrate metabolism; tricarboxylic acid cycle; isocitrate from oxaloacetate: step 1/2. This Heyndrickxia coagulans (Weizmannia coagulans) protein is Citrate synthase (ctsA).